Here is a 57-residue protein sequence, read N- to C-terminus: uncharacterized protein (57 aa).

Residues 9-45 are a coiled coil; it reads NWQEEIRKIIIERVRREAKKRLLEETRKLRMEMKSSK.

This is an uncharacterized protein from Archaeoglobus fulgidus (strain ATCC 49558 / DSM 4304 / JCM 9628 / NBRC 100126 / VC-16).